Here is a 386-residue protein sequence, read N- to C-terminus: Ribonuclease D (386 aa).

Residues 3-174 (HTITTTDELA…EIYEYLSAEL (172 aa)) form the 3'-5' exonuclease domain. Positions 213–294 (SGRVVAIAQQ…ARGMSVPNSE (82 aa)) constitute an HRDC domain.

It belongs to the RNase D family. The cofactor is a divalent metal cation.

The protein localises to the cytoplasm. It carries out the reaction Exonucleolytic cleavage that removes extra residues from the 3'-terminus of tRNA to produce 5'-mononucleotides.. Functionally, exonuclease involved in the 3' processing of various precursor tRNAs. Initiates hydrolysis at the 3'-terminus of an RNA molecule and releases 5'-mononucleotides. The chain is Ribonuclease D from Jannaschia sp. (strain CCS1).